A 180-amino-acid chain; its full sequence is Oligoribonuclease (180 aa).

In terms of domain architecture, Exonuclease spans 7-170 (LIWIDLEMTG…DDIRESIAEL (164 aa)). The active site involves Tyr-128.

The protein belongs to the oligoribonuclease family.

The protein localises to the cytoplasm. Functionally, 3'-to-5' exoribonuclease specific for small oligoribonucleotides. This is Oligoribonuclease from Pseudomonas fluorescens (strain Pf0-1).